The following is a 241-amino-acid chain: Carboxy-S-adenosyl-L-methionine synthase (241 aa).

S-adenosyl-L-methionine is bound by residues Tyr-38, 63–65, 88–89, 116–117, Asn-131, and Arg-198; these read GCS, DN, and DI.

Belongs to the class I-like SAM-binding methyltransferase superfamily. Cx-SAM synthase family. As to quaternary structure, homodimer.

It carries out the reaction prephenate + S-adenosyl-L-methionine = carboxy-S-adenosyl-L-methionine + 3-phenylpyruvate + H2O. Functionally, catalyzes the conversion of S-adenosyl-L-methionine (SAM) to carboxy-S-adenosyl-L-methionine (Cx-SAM). In Actinobacillus succinogenes (strain ATCC 55618 / DSM 22257 / CCUG 43843 / 130Z), this protein is Carboxy-S-adenosyl-L-methionine synthase.